Consider the following 308-residue polypeptide: Oxygen-dependent coproporphyrinogen-III oxidase (308 aa).

A substrate-binding site is contributed by S100. Residues H104 and H114 each coordinate a divalent metal cation. The active-site Proton donor is H114. Position 116-118 (116-118 (NFR)) interacts with substrate. H153 and H183 together coordinate a divalent metal cation. Positions 248-283 (YVEFNLVFDRGTIFGLQSGGRTESILSSMPPMATWK) are important for dimerization. 266 to 268 (GGR) contributes to the substrate binding site.

This sequence belongs to the aerobic coproporphyrinogen-III oxidase family. As to quaternary structure, homodimer. The cofactor is a divalent metal cation.

It is found in the cytoplasm. It carries out the reaction coproporphyrinogen III + O2 + 2 H(+) = protoporphyrinogen IX + 2 CO2 + 2 H2O. It participates in porphyrin-containing compound metabolism; protoporphyrin-IX biosynthesis; protoporphyrinogen-IX from coproporphyrinogen-III (O2 route): step 1/1. In terms of biological role, involved in the heme biosynthesis. Catalyzes the aerobic oxidative decarboxylation of propionate groups of rings A and B of coproporphyrinogen-III to yield the vinyl groups in protoporphyrinogen-IX. This is Oxygen-dependent coproporphyrinogen-III oxidase from Francisella tularensis subsp. mediasiatica (strain FSC147).